The chain runs to 391 residues: Multidrug resistance protein MdtL (391 aa).

A run of 12 helical transmembrane segments spans residues phenylalanine 4 to valine 24, isoleucine 42 to alanine 62, proline 69 to glutamate 89, leucine 93 to phenylalanine 113, leucine 131 to methionine 151, serine 158 to leucine 178, phenylalanine 203 to valine 222, alanine 245 to phenylalanine 265, threonine 269 to proline 289, valine 293 to methionine 313, leucine 331 to isoleucine 351, and methionine 356 to alanine 376.

The protein belongs to the major facilitator superfamily. DHA1 family. MdtL (TC 2.A.1.2.22) subfamily.

The protein resides in the cell inner membrane. Confers resistance to chloramphenicol. The polypeptide is Multidrug resistance protein MdtL (Escherichia coli O9:H4 (strain HS)).